We begin with the raw amino-acid sequence, 297 residues long: D-aminoacyl-tRNA deacylase (297 aa).

Belongs to the DtdA deacylase family. Monomer. Zn(2+) is required as a cofactor.

The enzyme catalyses a D-aminoacyl-tRNA + H2O = a tRNA + a D-alpha-amino acid + H(+). It catalyses the reaction glycyl-tRNA(Ala) + H2O = tRNA(Ala) + glycine + H(+). Functionally, D-aminoacyl-tRNA deacylase with broad substrate specificity. By recycling D-aminoacyl-tRNA to D-amino acids and free tRNA molecules, this enzyme counteracts the toxicity associated with the formation of D-aminoacyl-tRNA entities in vivo. In Methanosarcina acetivorans (strain ATCC 35395 / DSM 2834 / JCM 12185 / C2A), this protein is D-aminoacyl-tRNA deacylase.